Consider the following 109-residue polypeptide: Class I hydrophobin 18 (109 aa).

An N-terminal signal peptide occupies residues 1–20; sequence MFTEQVLNVIILLQTATVTA. Cystine bridges form between Cys28–Cys88, Cys35–Cys82, Cys36–Cys69, and Cys89–Cys102. Residues Asn91 and Asn106 are each glycosylated (N-linked (GlcNAc...) asparagine).

This sequence belongs to the fungal hydrophobin family. Self-assembles to form functional amyloid fibrils called rodlets. Self-assembly into fibrillar rodlets occurs spontaneously at hydrophobic:hydrophilic interfaces and the rodlets further associate laterally to form amphipathic monolayers.

The protein resides in the secreted. Its subcellular location is the cell wall. Functionally, aerial growth, conidiation, and dispersal of filamentous fungi in the environment rely upon a capability of their secreting small amphipathic proteins called hydrophobins (HPBs) with low sequence identity. Class I can self-assemble into an outermost layer of rodlet bundles on aerial cell surfaces, conferring cellular hydrophobicity that supports fungal growth, development and dispersal; whereas Class II form highly ordered films at water-air interfaces through intermolecular interactions but contribute nothing to the rodlet structure. The protein is Class I hydrophobin 18 of Pleurotus ostreatus (strain PC15) (Oyster mushroom).